The chain runs to 1288 residues: Outer capsid protein lambda-2 (1288 aa).

892-899 lines the ATP pocket; it reads GAAAAGKS.

The protein belongs to the orthoreovirus lambda-2 protein family. Interacts with protein mu-NS; in viral inclusions.

The protein localises to the virion. The catalysed reaction is a 5'-end diphospho-ribonucleoside in mRNA + GTP + H(+) = a 5'-end (5'-triphosphoguanosine)-ribonucleoside in mRNA + diphosphate. The enzyme catalyses a 5'-end (5'-triphosphoguanosine)-ribonucleoside in mRNA + S-adenosyl-L-methionine = a 5'-end (N(7)-methyl 5'-triphosphoguanosine)-ribonucleoside in mRNA + S-adenosyl-L-homocysteine. In terms of biological role, outer capsid protein involved in mRNA capping. Catalyzes the last 3 enzymatic activities for formation of the 5' cap structure on the viral plus-strand transcripts, namely the RNA guanylyltransferase, RNA-7N- and RNA-2'O-methyltransferase activities. The polypeptide is Outer capsid protein lambda-2 (L2) (Reovirus type 2 (strain D5/Jones) (T2J)).